The chain runs to 958 residues: SLIT and NTRK-like protein 5 (958 aa).

The first 40 residues, 1 to 40 (MHTCCPPVTLEQDLHRKMHSWMLQTLAFAVTSLVLSCAET), serve as a signal peptide directing secretion. The Extracellular portion of the chain corresponds to 41–664 (IDYYGEICDN…GGGASSVPLS (624 aa)). LRR repeat units follow at residues 82–103 (PIYH…EFVN), 106–127 (GASI…AFHG), 130–151 (GLRR…TFLG), 154–175 (NLEY…AFGK), 178–199 (LLQV…LFRF), and 201–222 (PLTH…GLLQ). Asn-103 carries N-linked (GlcNAc...) asparagine glycosylation. The LRRCT 1 domain occupies 235–286 (NPWNCSCELISLKDWLDSISYSALVGDVVCETPFRLHGRDLDEVSKQELCPR). Residues 317–358 (ATSSSAVYKPPLKPPKGTRQPNKPRVRPTSRQPSKDLGYSNY) are disordered. Positions 365 to 407 (QTKSPVPLECPTACSCNLQISDLGLNVNCQERKIESIAELQPK) constitute an LRRNT domain. LRR repeat units lie at residues 410 to 431 (NPKK…DFLE), 434 to 455 (GLDL…AFGD), 458 to 479 (NLRR…LFYG), 482 to 503 (SLQY…TFDP), 506 to 527 (NLQL…VFSG), and 529 to 550 (TLLR…GVLD). In terms of domain architecture, LRRCT 2 spans 563-614 (NPWDCTCDIVGMKLWVEQLKVGVLVDEVICKAPKKFAETDMRSIKSELLCPD). N-linked (GlcNAc...) asparagine glycosylation occurs at Asn-644. A helical membrane pass occupies residues 665-685 (VLILSLLLVFIMSVFVAAGLF). Over 686-958 (VLVMKRRKKN…LEKQTTFSQF (273 aa)) the chain is Cytoplasmic. The segment at 789–844 (NHHLQQQQQPPPPPQQPQQQPPPQLQLQPGEEERRESHHLRSPAYSVSTIEPREDL) is disordered. Over residues 797–812 (QPPPPPQQPQQQPPPQ) the composition is skewed to pro residues.

The protein belongs to the SLITRK family. As to expression, expressed predominantly in the cerebral cortex of the brain but also at low levels in the spinal cord and medulla.

It is found in the membrane. Functionally, suppresses neurite outgrowth. In Homo sapiens (Human), this protein is SLIT and NTRK-like protein 5 (SLITRK5).